We begin with the raw amino-acid sequence, 2144 residues long: Polyketide synthase-like protein Preu9 (2144 aa).

Positions 1-250 constitute a Ketosynthase family 3 (KS3) domain; sequence MYALHLAVNA…GANAHCIIDH (250 aa). The tract at residues 276-325 is disordered; the sequence is QNGHLNEFAANGTTNAPSRDHRNGITDGRADGNTNGHPNANGDVGGNPIN. Positions 293–305 are enriched in basic and acidic residues; it reads SRDHRNGITDGRA. The interval 435 to 738 is malonyl-CoA:ACP transacylase (MAT); the sequence is FVFTGQGAQW…KSPVEQILKS (304 aa). Positions 827-965 are N-terminal hotdog fold; sequence HDLLGSKVVG…GCVKLIIKSS (139 aa). The tract at residues 827 to 1137 is dehydratase (DH) domain; that stretch reads HDLLGSKVVG…ERLRCVSYSR (311 aa). The PKS/mFAS DH domain maps to 827–1141; that stretch reads HDLLGSKVVG…CVSYSRISSD (315 aa). The active-site Proton acceptor; for dehydratase activity is the His859. The segment at 979–1141 is C-terminal hotdog fold; it reads TLRPVDVRAW…CVSYSRISSD (163 aa). Asp1050 functions as the Proton donor; for dehydratase activity in the catalytic mechanism. The methyltransferase (MT) domain stretch occupies residues 1305-1494; it reads TGIYPQLHRI…GLDVVLDDFP (190 aa). The interval 1731–2042 is enoyl reductase (ER) domain; the sequence is GVPNSLCFAS…LANMIGKLVV (312 aa).

Polyketide synthase-like protein that lacks important domains such as carrier domain and does probably not function as a polyketide synthase. The chain is Polyketide synthase-like protein Preu9 from Preussia isomera (Coprophilous fungus).